The following is a 450-amino-acid chain: uncharacterized protein (450 aa).

The span at 387–416 (ELDEKNNNKEENKNQDLHEPKESSSEDLLK) shows a compositional bias: basic and acidic residues. The tract at residues 387-439 (ELDEKNNNKEENKNQDLHEPKESSSEDLLKRLNNLKINTNEGPVQDNENHDNE) is disordered.

This is an uncharacterized protein from Saccharomyces cerevisiae (strain ATCC 204508 / S288c) (Baker's yeast).